Consider the following 237-residue polypeptide: Transcriptional regulatory protein YvrH (237 aa).

Positions 5 to 119 (SILIVDDEKA…ELAARIRAHL (115 aa)) constitute a Response regulatory domain. Asp55 bears the 4-aspartylphosphate mark. Positions 131–230 (NQTYTYDYFT…VRGLGYRFIP (100 aa)) form a DNA-binding region, ompR/PhoB-type.

Post-translationally, phosphorylated by YvrG.

It localises to the cytoplasm. Functionally, member of the two-component regulatory system YvrG/YvrH that positively regulates 7 transcriptional units (wprA, wapA-yxxG, dltABCDE, sunA, sunT-bdbA-yolJ-bdbB, sigO-rsoA, and sigX-rsiX), and negatively regulates the lytABC operon. The protein is Transcriptional regulatory protein YvrH (yvrH) of Bacillus subtilis (strain 168).